The sequence spans 39 residues: Protein YkiC (39 aa).

Residues 13–35 traverse the membrane as a helical segment; it reads LLSAKLCNCTQAIMTHIIASFLA.

The protein resides in the cell inner membrane. This chain is Protein YkiC, found in Escherichia coli (strain K12).